The sequence spans 182 residues: Proline-rich protein, Y-linked (182 aa).

2 disordered regions span residues 1–22 (MMRR…KPRD) and 89–108 (VPAD…PPPG). The span at 91–108 (ADPPPASPYRTSPRPPPG) shows a compositional bias: pro residues. The region spanning 154–167 (WMKLETIILSKLSQ) is the DUF1725 domain.

The chain is Proline-rich protein, Y-linked (PRORY) from Homo sapiens (Human).